The chain runs to 134 residues: Interferon-induced transmembrane protein 5 (134 aa).

Residues 1–20 are compositionally biased toward basic and acidic residues; sequence MDTSYPREDPRAPSSRKADA. The tract at residues 1–31 is disordered; the sequence is MDTSYPREDPRAPSSRKADAAAHTALSMGTP. Topologically, residues 1–39 are extracellular; the sequence is MDTSYPREDPRAPSSRKADAAAHTALSMGTPGPTPRDHM. Residues 40–60 form a helical membrane-spanning segment; it reads LWSVFSTMYLNLCCLGFLALV. S-palmitoyl cysteine attachment occurs at residues Cys-52, Cys-53, and Cys-86. Topologically, residues 61–88 are cytoplasmic; sequence HSVKARDQKMAGNLEAARQYGSKAKCYN. Residues 89–109 traverse the membrane as a helical segment; sequence ILAAMWTLVPPLLLLGLVVTG. Residues 110-134 lie on the Extracellular side of the membrane; sequence ALHLSKLAKDSAAFFSTKFDEEDYN.

This sequence belongs to the CD225/Dispanin family. As to quaternary structure, interacts with FKBP11. Palmitoylated. As to expression, detected in embryonic bone (at protein level). Highly expressed in osteoblasts of adults and embryos. Expressed in primitive hemopoietic cells.

The protein localises to the cell membrane. In terms of biological role, required for normal bone mineralization. In Mus musculus (Mouse), this protein is Interferon-induced transmembrane protein 5 (Ifitm5).